A 421-amino-acid polypeptide reads, in one-letter code: Mitochondrial distribution and morphology protein 10 (421 aa).

The protein belongs to the MDM10 family. As to quaternary structure, component of the ER-mitochondria encounter structure (ERMES) or MDM complex, composed of MMM1, MDM10, MDM12 and MDM34. Associates with the mitochondrial outer membrane sorting assembly machinery SAM(core) complex.

It is found in the mitochondrion outer membrane. Component of the ERMES/MDM complex, which serves as a molecular tether to connect the endoplasmic reticulum and mitochondria. Components of this complex are involved in the control of mitochondrial shape and protein biogenesis and may function in phospholipid exchange. MDM10 is involved in the late assembly steps of the general translocase of the mitochondrial outer membrane (TOM complex). Functions in the TOM40-specific route of the assembly of outer membrane beta-barrel proteins, including the association of TOM40 with the receptor TOM22 and small TOM proteins. Can associate with the SAM(core) complex as well as the MDM12-MMM1 complex, both involved in late steps of the major beta-barrel assembly pathway, that is responsible for biogenesis of all outer membrane beta-barrel proteins. May act as a switch that shuttles between both complexes and channels precursor proteins into the TOM40-specific pathway. Plays a role in mitochondrial morphology and in the inheritance of mitochondria. This chain is Mitochondrial distribution and morphology protein 10, found in Vanderwaltozyma polyspora (strain ATCC 22028 / DSM 70294 / BCRC 21397 / CBS 2163 / NBRC 10782 / NRRL Y-8283 / UCD 57-17) (Kluyveromyces polysporus).